The sequence spans 327 residues: Peroxidase 15 (327 aa).

Positions 1–23 (MASFSPLLAMALAIFIFSSHSNA) are cleaved as a signal peptide. At Gln24 the chain carries Pyrrolidone carboxylic acid. Disulfide bonds link Cys34–Cys115, Cys67–Cys72, Cys121–Cys323, and Cys200–Cys232. Asn36 carries an N-linked (GlcNAc...) asparagine glycan. The active-site Proton acceptor is the His65. Residues Asp66, Val69, Gly71, Asp73, and Ser75 each contribute to the Ca(2+) site. Asn81, Asn96, and Asn159 each carry an N-linked (GlcNAc...) asparagine glycan. Position 163 (Pro163) interacts with substrate. Residues Asn168 and Asn171 are each glycosylated (N-linked (GlcNAc...) asparagine). His193 contributes to the heme b binding site. Residue Thr194 participates in Ca(2+) binding. N-linked (GlcNAc...) asparagine glycans are attached at residues Asn209 and Asn221. Positions 245, 248, and 253 each coordinate Ca(2+). Asn287 and Asn291 each carry an N-linked (GlcNAc...) asparagine glycan.

The protein belongs to the peroxidase family. Classical plant (class III) peroxidase subfamily. Ca(2+) serves as cofactor. It depends on heme b as a cofactor.

It is found in the secreted. The catalysed reaction is 2 a phenolic donor + H2O2 = 2 a phenolic radical donor + 2 H2O. Its function is as follows. Removal of H(2)O(2), oxidation of toxic reductants, biosynthesis and degradation of lignin, suberization, auxin catabolism, response to environmental stresses such as wounding, pathogen attack and oxidative stress. These functions might be dependent on each isozyme/isoform in each plant tissue. The sequence is that of Peroxidase 15 from Ipomoea batatas (Sweet potato).